Here is a 676-residue protein sequence, read N- to C-terminus: Potassium voltage-gated channel subfamily KQT member 1 (676 aa).

2 disordered regions span residues 1-28 and 62-84; these read MAAA…RGSA and APPA…PRPP. Residues 1-120 are Cytoplasmic-facing; the sequence is MAAASSPPRA…YNFLERPTGW (120 aa). S27 is subject to Phosphoserine; by PKA. Residues 62–73 are compositionally biased toward pro residues; that stretch reads APPASPAAPAAP. The chain crosses the membrane as a helical span at residues 121–142; the sequence is KCFVYHFAVFLIVLVCLIFSVL. The Extracellular portion of the chain corresponds to 143 to 153; that stretch reads STIEQYAALAT. The chain crosses the membrane as a helical span at residues 154–176; sequence GTLFWMEIVLVVFFGTEYVVRLW. Over 177–192 the chain is Cytoplasmic; sequence SAGCRSKYVGLWGRLR. A helical transmembrane segment spans residues 193–218; sequence FARKPISIIDLIVVVASMVVLCVGSK. Topologically, residues 219-226 are extracellular; it reads GQVFATSA. The helical; Voltage-sensor transmembrane segment at 227-242 threads the bilayer; that stretch reads IRGIRFLQILRMLHVD. The interaction with KCNE3 stretch occupies residues 238-246; it reads MLHVDRQGG. The Cytoplasmic portion of the chain corresponds to 243-260; that stretch reads RQGGTWRLLGSVVFIHRQ. Q244 contacts a 1,2-diacyl-sn-glycero-3-phospho-(1D-myo-inositol-4,5-bisphosphate). The helical transmembrane segment at 261–283 threads the bilayer; it reads ELITTLYIGFLGLIFSSYFVYLA. The Extracellular portion of the chain corresponds to 284–299; it reads EKDAVNESGRVEFGSY. The N-linked (GlcNAc...) asparagine glycan is linked to N289. Residues 300-320 constitute an intramembrane region (pore-forming); the sequence is ADALWWGVVTVTTIGYGDKVP. Topologically, residues 321–322 are extracellular; it reads QT. The chain crosses the membrane as a helical span at residues 323–348; the sequence is WVGKTIASCFSVFAISFFALPAGILG. The Cytoplasmic segment spans residues 349 to 676; the sequence is SGFALKVQQK…VPRRGPDEGS (328 aa). Residues 370 to 382 are interaction with CALM; the sequence is AAASLIQTAWRCY. Residues S407 and S409 each carry the phosphoserine modification. An interaction with CALM; calcium-dependent region spans residues 515–529; that stretch reads KVIRRMQYFVAKKKF. Positions 535 to 572 are interaction with KCNE1 C-terminus; the sequence is PYDVRDVIEQYSQGHLNLMVRIKELQRRLDQSIGKPSL. A coiled-coil region spans residues 585-621; sequence SNTIGARLNRVEDKVTQLDQRLALITDMLHQLLSLHG. The interaction with AKAP9 stretch occupies residues 588 to 616; that stretch reads IGARLNRVEDKVTQLDQRLALITDMLHQL. The segment at 589–620 is C-terminal assembly domain (tetramerization); that stretch reads GARLNRVEDKVTQLDQRLALITDMLHQLLSLH. The tract at residues 620–676 is disordered; the sequence is HGGSTPGSGGPPREGGAHITQPCGSGGSVDPELFLPSNTLPTYEQLTVPRRGPDEGS. Residues 623 to 632 show a composition bias toward gly residues; the sequence is STPGSGGPPR. Positions 655–664 are enriched in polar residues; the sequence is PSNTLPTYEQ.

It belongs to the potassium channel family. KQT (TC 1.A.1.15) subfamily. Kv7.1/KCNQ1 sub-subfamily. Tetramer. Heterotetramer with KCNE1; targets to the membrane raft. Interacts (via C-terminus) with calmodulin; forms a heterooctameric structure (with 4:4 KCNQ1:CALM stoichiometry); the interaction is calcium-independent, constitutive, participates in the proper assembly of a functional channel and also acts a calcium sensor. KCNQ1 channels interact more strongly with Ca(2+)-CALM than with apoCALM. Interacts with AKAP9; targets protein kinase A (PKA) catalytic and regulatory subunits and protein phosphatase 1 (PP1) to the KCNQ1-KCNE1 complex, allowing PKA-mediated phosphorylation and increase of delayed rectifier potassium channel activity. Interacts with KCNE2; forms a heterooligomer complex that targets to the membrane raft and leading to currents with an apparently instantaneous activation, a rapid deactivation process and a linear current-voltage relationship and decreases the amplitude of the outward current. Interacts with AP2M1; mediates estrogen-induced internalization via clathrin-coated vesicles. Interacts with NEDD4L; promotes internalization and decreases I(Ks) currents. Interacts with USP2; counteracts the NEDD4L-specific down-regulation of I(Ks) and restore plasma membrane localization. Heterotetramer with KCNQ5; has a voltage-gated potassium channel activity. Interacts with KCNE3; four KCNE3 molecules are bound to one KCNQ1 tetramer (4:4 KCNQ1:KCNE3 stoichiometry); alters membrane raft localization; affects KCNQ1 structure and gating properties. Interacts with KCNE4; impairs KCNQ1 localization in lipid rafts and inhibits voltage-gated potassium channel activity. Interacts with KCNE5; impairs KCNQ1 localization in lipid rafts and only conducts current upon strong and continued depolarization. Interacts with SLC5A3; forms coregulatory channel-transporter complexes that modulate Na(+)-coupled myo-inositol influx through the transporter. Phosphorylation at Ser-27 by PKA; increases delayed rectifier potassium channel activity of the KCNQ1-KCNE1 complex through a macromolecular complex that includes PKA, PP1, and the targeting protein AKAP9. Post-translationally, ubiquitinated by NEDD4L; promotes internalization. The ubiquitinylated form is internalized through a clathrin-mediated endocytosis by interacting with AP2M1 and is recycled back to the cell membrane via RAB4A and RAB11A. In terms of processing, deubiquitinated by USP2; counteracts the NEDD4L-specific down-regulation of I(Ks) and restores the membrane localization. In terms of tissue distribution, abundantly expressed in heart, pancreas, prostate, kidney, small intestine and peripheral blood leukocytes. Less abundant in placenta, lung, spleen, colon, thymus, testis and ovaries.

The protein resides in the cell membrane. It localises to the cytoplasmic vesicle membrane. Its subcellular location is the early endosome. It is found in the membrane raft. The protein localises to the endoplasmic reticulum. The protein resides in the basolateral cell membrane. It localises to the apical cell membrane. It catalyses the reaction K(+)(in) = K(+)(out). With respect to regulation, PIP2 molecule is essential to activate KCNQ channels by inducing the coupling of the voltage-sensing domain (VSD) and the pore-forming domain (PD). Upon channel activation, PIP2 disrupts the VSD-calmodulin/CALM interactions, causing the release of CALM from the VSD which triggers the opening of the gate. Calcium potentiates KCNQ1 channel current through calcium-bound CALM. Calcium-bound CALM competes with PIP2 to stabilize the channel open state. Pore-forming subunit of the voltage-gated potassium (Kv) channel involved in the regulation of cardiomyocyte excitability and important in normal development and functions of myocardium, inner ear, stomach and colon. Associates with KCNE beta subunits that modulates current kinetics. Induces a voltage-dependent current by rapidly activating and slowly deactivating potassium-selective outward current. Also promotes a delayed voltage activated potassium current showing outward rectification characteristic. During beta-adrenergic receptor stimulation, participates in cardiac repolarization by associating with KCNE1 to form the I(Ks) cardiac potassium current that increases the amplitude and slows down the activation kinetics of outward potassium current I(Ks). Muscarinic agonist oxotremorine-M strongly suppresses KCNQ1/KCNE1 current. When associated with KCNE3, forms the potassium channel that is important for cyclic AMP-stimulated intestinal secretion of chloride ions. This interaction with KCNE3 is reduced by 17beta-estradiol, resulting in the reduction of currents. During conditions of increased substrate load, maintains the driving force for proximal tubular and intestinal sodium ions absorption, gastric acid secretion, and cAMP-induced jejunal chloride ions secretion. Allows the provision of potassium ions to the luminal membrane of the secretory canaliculus in the resting state as well as during stimulated acid secretion. When associated with KCNE2, forms a heterooligomer complex leading to currents with an apparently instantaneous activation, a rapid deactivation process and a linear current-voltage relationship and decreases the amplitude of the outward current. When associated with KCNE4, inhibits voltage-gated potassium channel activity. When associated with KCNE5, this complex only conducts current upon strong and continued depolarization. Also forms a heterotetramer with KCNQ5; has a voltage-gated potassium channel activity. Binds with phosphatidylinositol 4,5-bisphosphate. KCNQ1-KCNE2 channel associates with Na(+)-coupled myo-inositol symporter in the apical membrane of choroid plexus epithelium and regulates the myo-inositol gradient between blood and cerebrospinal fluid with an impact on neuron excitability. Its function is as follows. Non-functional alone but modulatory when coexpressed with the full-length isoform 1. The polypeptide is Potassium voltage-gated channel subfamily KQT member 1 (Homo sapiens (Human)).